Consider the following 298-residue polypeptide: Protoheme IX farnesyltransferase (298 aa).

The next 9 membrane-spanning stretches (helical) occupy residues 16–36 (VVAL…PDMP), 45–65 (ALGF…NQLL), 93–113 (VFAG…VNVI), 114–134 (TAVL…VYLK), 141–161 (IVIG…AVTG), 172–192 (SLLV…LAIF), 223–243 (VLLA…VFYL), 244–264 (GGAI…LNPP), and 277–297 (IVYL…LPWV).

Belongs to the UbiA prenyltransferase family. Protoheme IX farnesyltransferase subfamily.

It is found in the cell inner membrane. It carries out the reaction heme b + (2E,6E)-farnesyl diphosphate + H2O = Fe(II)-heme o + diphosphate. Its pathway is porphyrin-containing compound metabolism; heme O biosynthesis; heme O from protoheme: step 1/1. Converts heme B (protoheme IX) to heme O by substitution of the vinyl group on carbon 2 of heme B porphyrin ring with a hydroxyethyl farnesyl side group. The chain is Protoheme IX farnesyltransferase from Xanthomonas euvesicatoria pv. vesicatoria (strain 85-10) (Xanthomonas campestris pv. vesicatoria).